A 454-amino-acid polypeptide reads, in one-letter code: tRNA modification GTPase MnmE (454 aa).

(6S)-5-formyl-5,6,7,8-tetrahydrofolate is bound by residues R23, E80, and K120. A TrmE-type G domain is found at 216-377 (TIKIVIAGPP…LKNKILEITT (162 aa)). A K(+)-binding site is contributed by N226. Residues 226–231 (NVGKSS), 245–251 (TNIPGTT), and 270–273 (DTAG) contribute to the GTP site. S230 contacts Mg(2+). The K(+) site is built by T245, I247, and T250. Mg(2+) is bound at residue T251. K454 contributes to the (6S)-5-formyl-5,6,7,8-tetrahydrofolate binding site.

Belongs to the TRAFAC class TrmE-Era-EngA-EngB-Septin-like GTPase superfamily. TrmE GTPase family. Homodimer. Heterotetramer of two MnmE and two MnmG subunits. Requires K(+) as cofactor.

The protein localises to the cytoplasm. Its function is as follows. Exhibits a very high intrinsic GTPase hydrolysis rate. Involved in the addition of a carboxymethylaminomethyl (cmnm) group at the wobble position (U34) of certain tRNAs, forming tRNA-cmnm(5)s(2)U34. The protein is tRNA modification GTPase MnmE of Buchnera aphidicola subsp. Cinara cedri (strain Cc).